We begin with the raw amino-acid sequence, 1557 residues long: Target of rapamycin complex 1 subunit KOG1 (1557 aa).

HEAT repeat units lie at residues 548–586 (RHPPEQLPIVLQVLLSQVHRIRALVLLSRFLDLGPWAVY), 588–625 (SLSIGIFPYVLKLLQSPAPELKPILVFIWARIMSIDYK), 777–814 (CMNTGAVEILLKSLKDPVPEVRTASIFALKHFISGFQD), and 888–925 (RQEIGNLISILPLINDGSSLVRKELVVYFSHIVSRYSN). The segment covering 1084–1098 (SESNSDSDTQSSNTS) has biased composition (low complexity). The disordered stretch occupies residues 1084 to 1114 (SESNSDSDTQSSNTSMKSHTSKKGPSGLYLL). WD repeat units follow at residues 1207 to 1248 (NNKS…SKFS), 1252 to 1293 (PFGT…DTFK), 1296 to 1346 (SAWR…VEVD), 1350 to 1390 (KTSS…RDSM), 1400 to 1440 (KQGV…PVES), 1452 to 1492 (SQQK…NSFK), and 1517 to 1557 (TSDA…IDYF).

This sequence belongs to the WD repeat RAPTOR family. In terms of assembly, the target of rapamycin complex 1 (TORC1) is composed of at least KOG1, LST8, TCO89 and either TOR1 (TORC1-A) or TOR2 (TORC1-B). Interacts with PIB2; following activation of PIB2 by glutamine or cysteine. TORC1 binds to and is inhibited by FKBP-rapamycin.

The protein localises to the cell membrane. It localises to the vacuole membrane. In terms of biological role, component of TORC1, which regulates multiple cellular processes to control cell growth in response to environmental signals. Nutrient limitation and environmental stress signals cause inactivation of TORC1. Active TORC1 positively controls ribosome biogenesis via control of rRNA, ribosomal protein and tRNA gene expression, and rRNA processing. TORC1 positively controls protein biosynthesis by regulation of mRNA stability, translation initiation factor activity, and high-affinity amino acid permeases that serve to provide amino acids for use by the translation machinery. TORC1 also promotes growth by sequestering a number of nutrient and general stress-responsive transcription factors in the cytoplasm. TORC1 negatively controls macroautophagy, a process to recycle surplus cytoplasmic mass under nutrient starvation conditions. KOG1 may have a role in binding and recruiting substrates of TORC1. The chain is Target of rapamycin complex 1 subunit KOG1 (KOG1) from Saccharomyces cerevisiae (strain ATCC 204508 / S288c) (Baker's yeast).